The sequence spans 352 residues: Ion-translocating oxidoreductase complex subunit D (352 aa).

5 consecutive transmembrane segments (helical) span residues 20–40 (IMLL…WFFG), 42–62 (GTLV…ALVL), 78–109 (ALLT…VIIA), 123–143 (PAMI…TSWL), and 148–168 (IAVN…GHTA). At Thr187 the chain carries FMN phosphoryl threonine. The next 5 helical transmembrane spans lie at 214-234 (ILAG…GVWL), 242-262 (WHIP…GWLF), 267-287 (LAAP…FFIL), 301-321 (LIFG…GGYP), and 322-342 (DGVA…DYYT).

This sequence belongs to the NqrB/RnfD family. As to quaternary structure, the complex is composed of six subunits: RsxA, RsxB, RsxC, RsxD, RsxE and RsxG. FMN is required as a cofactor.

The protein resides in the cell inner membrane. Functionally, part of a membrane-bound complex that couples electron transfer with translocation of ions across the membrane. Required to maintain the reduced state of SoxR. This is Ion-translocating oxidoreductase complex subunit D from Escherichia coli O6:K15:H31 (strain 536 / UPEC).